The primary structure comprises 108 residues: Protein YcgL (108 aa).

In terms of domain architecture, YcgL spans 12 to 96 (MFCVIYRSSK…PPEDLLKQHL (85 aa)).

The chain is Protein YcgL from Escherichia coli O9:H4 (strain HS).